Reading from the N-terminus, the 232-residue chain is Adenosylcobinamide-GDP ribazoletransferase (232 aa).

7 helical membrane-spanning segments follow: residues 24–44 (LWAF…ILYL), 46–66 (IPLA…LLHL), 96–116 (IAGV…LSML), 117–137 (PFYA…LGLA), 153–173 (GMNG…YLPV), 174–194 (VIYD…WYVI), and 210–230 (GAMA…SLCF).

This sequence belongs to the CobS family. Mg(2+) serves as cofactor.

Its subcellular location is the cell membrane. It carries out the reaction alpha-ribazole + adenosylcob(III)inamide-GDP = adenosylcob(III)alamin + GMP + H(+). The enzyme catalyses alpha-ribazole 5'-phosphate + adenosylcob(III)inamide-GDP = adenosylcob(III)alamin 5'-phosphate + GMP + H(+). Its pathway is cofactor biosynthesis; adenosylcobalamin biosynthesis; adenosylcobalamin from cob(II)yrinate a,c-diamide: step 7/7. Joins adenosylcobinamide-GDP and alpha-ribazole to generate adenosylcobalamin (Ado-cobalamin). Also synthesizes adenosylcobalamin 5'-phosphate from adenosylcobinamide-GDP and alpha-ribazole 5'-phosphate. This chain is Adenosylcobinamide-GDP ribazoletransferase, found in Pyrococcus abyssi (strain GE5 / Orsay).